Here is a 413-residue protein sequence, read N- to C-terminus: 2,3-bisphosphoglycerate-independent phosphoglycerate mutase (413 aa).

This sequence belongs to the BPG-independent phosphoglycerate mutase family. A-PGAM subfamily.

The enzyme catalyses (2R)-2-phosphoglycerate = (2R)-3-phosphoglycerate. The protein operates within carbohydrate degradation; glycolysis; pyruvate from D-glyceraldehyde 3-phosphate: step 3/5. Catalyzes the interconversion of 2-phosphoglycerate and 3-phosphoglycerate. The protein is 2,3-bisphosphoglycerate-independent phosphoglycerate mutase of Metallosphaera sedula (strain ATCC 51363 / DSM 5348 / JCM 9185 / NBRC 15509 / TH2).